A 378-amino-acid chain; its full sequence is Alginate lyase (378 aa).

Positions 1–28 (MQTPKLIRPTLLSMAILSSMAWATGASA) are cleaved as a signal peptide. Residues 67–68 (SK), 140–141 (HT), and Y258 each bind substrate.

This sequence belongs to the polysaccharide lyase 5 family.

The protein resides in the periplasm. It carries out the reaction Eliminative cleavage of alginate to give oligosaccharides with 4-deoxy-alpha-L-erythro-hex-4-enuronosyl groups at their non-reducing ends and beta-D-mannuronate at their reducing end.. The monovalent cation sodium enhances activity but is not absolutely required. Catalyzes the depolymerization of alginate by cleaving the beta-1,4 glycosidic bond between two adjacent sugar residues via a beta-elimination mechanism. Degrades deacetylated polymannuronate (polyM) alginate from P.aeruginosa more efficiently than non-deacetylated polyM and alginate from M.pyrifera. AlgL from P.syringae also degrades its own alginate, which may indicate a role in cleaving preformed alginate and/or in determining the length of the alginate polymer. May serve to degrade mislocalized alginate that is trapped in the periplasmic space. The chain is Alginate lyase from Pseudomonas syringae pv. syringae.